The chain runs to 552 residues: Mothers against decapentaplegic homolog 4 (552 aa).

Residues 1 to 322 (MDNMSITNTP…PISNHPAPEY (322 aa)) form a mediates interaction with ZBTB7A region. Residues 18 to 142 (SIVHSLMCHR…YERVVSPGID (125 aa)) form the MH1 domain. N6-acetyllysine is present on Lys37. The tract at residues 44–69 (VKKLKEKKDELDSLITAITTNGAHPS) is required for interaction with TSC22D1. Cys71 contributes to the Zn(2+) binding site. Lys113 participates in a covalent cross-link: Glycyl lysine isopeptide (Lys-Gly) (interchain with G-Cter in SUMO2). Residues Cys115, Cys127, and His132 each coordinate Zn(2+). Residues 167–193 (EGQPSLPTEGHSIQTIQHPPSNRASTE) are disordered. Residues 177-193 (HSIQTIQHPPSNRASTE) show a composition bias toward polar residues. The segment at 275 to 320 (PYTPNLPHHQNGHLQHHPPMPPHPGHYWPVHNELAFQPPISNHPAP) is SAD. The 230-residue stretch at 323–552 (WCSIAYFEMD…MPIADPQPLD (230 aa)) folds into the MH2 domain. N6-acetyllysine occurs at positions 428 and 507. A Glycyl lysine isopeptide (Lys-Gly) (interchain with G-Cter in ubiquitin) cross-link involves residue Lys519.

Belongs to the dwarfin/SMAD family. Monomer; in the absence of TGF-beta activation. Heterotrimer; on TGF-beta activation. Heterotrimer composed of two molecules of a C-terminally phosphorylated R-SMAD molecule, SMAD2 or SMAD3, and one molecule of SMAD4 to form the transcriptional active SMAD2/SMAD3-SMAD4 complex. Found in a ternary complex composed of SMAD4, STK11/LKB1 and STK11IP. Found in a complex with SMAD1 and YY1. Identified in a complex that contains at least ZNF451, SMAD2, SMAD3 and SMAD4. Interacts with ATF2, COPS5, DACH1, MSG1, SKI, STK11/LKB1, STK11IP and TRIM33. Associates with ZNF423 or ZNF521 in response to BMP2 leading to activate transcription of BMP target genes. Interacts with USP9X. Interacts with RBPMS. Interacts with WWTR1 (via coiled-coil domain). Interacts with CITED1 and CITED2. Interacts with PDPK1 (via PH domain). Interacts with VPS39; this interaction affects heterodimer formation with SMAD3, but not with SMAD2, and leads to inhibition of SMAD3-dependent transcription activation. Interactions with VPS39 and SMAD2 may be mutually exclusive. Interacts (via MH2 domain) with ZNF451 (via N-terminal zinc-finger domains). Interacts with ZC3H3. Interacts weakly with ZNF8. Interacts with NUP93 and IPO7; translocates SMAD4 to the nucleus through the NPC upon BMP7 stimulation resulting in activation of SMAD4 signaling. Interacts with CREB3L1, the interaction takes place upon TGFB1 induction and SMAD4 acts as a CREB3L1 coactivator to induce the expression of genes involved in the assembly of collagen extracellular matrix. Interacts with DLX1. Interacts with ZBTB7A; the interaction is direct and stimulated by TGFB1. Interacts with CREBBP; the recruitment of this transcriptional coactivator is negatively regulated by ZBTB7A. Interacts with EP300; the interaction with this transcriptional coactivator is negatively regulated by ZBTB7A. Interacts with HDAC1. Interacts (via MH2 domain) with ZMIZ1 (via SP-RING-type domain); in the TGF-beta signaling pathway increases the activity of the SMAD3/SMAD4 transcriptional complex. Interacts (via N-terminus) with TSC22D1. Phosphorylated by PDPK1. Post-translationally, monoubiquitinated on Lys-519 by E3 ubiquitin-protein ligase TRIM33. Monoubiquitination hampers its ability to form a stable complex with activated SMAD2/3 resulting in inhibition of TGF-beta/BMP signaling cascade. Deubiquitination by USP9X restores its competence to mediate TGF-beta signaling.

The protein resides in the cytoplasm. It is found in the nucleus. Its function is as follows. Common SMAD (co-SMAD) is the coactivator and mediator of signal transduction by TGF-beta (transforming growth factor). Component of the heterotrimeric SMAD2/SMAD3-SMAD4 complex that forms in the nucleus and is required for the TGF-mediated signaling. Promotes binding of the SMAD2/SMAD4/FAST-1 complex to DNA and provides an activation function required for SMAD1 or SMAD2 to stimulate transcription. Component of the multimeric SMAD3/SMAD4/JUN/FOS complex which forms at the AP1 promoter site; required for synergistic transcriptional activity in response to TGF-beta. Acts synergistically with SMAD1 and YY1 in bone morphogenetic protein (BMP)-mediated cardiac-specific gene expression. Binds to SMAD binding elements (SBEs) (5'-GTCT/AGAC-3') within BMP response element (BMPRE) of cardiac activating regions. May act as a tumor suppressor. Positively regulates PDPK1 kinase activity by stimulating its dissociation from the 14-3-3 protein YWHAQ which acts as a negative regulator. In muscle physiology, plays a central role in the balance between atrophy and hypertrophy. When recruited by MSTN, promotes atrophy response via phosphorylated SMAD2/4. MSTN decrease causes SMAD4 release and subsequent recruitment by the BMP pathway to promote hypertrophy via phosphorylated SMAD1/5/8. This Rattus norvegicus (Rat) protein is Mothers against decapentaplegic homolog 4 (Smad4).